The chain runs to 200 residues: LexA repressor (200 aa).

Residues 28–48 (RAEIAQHFGFSSPNAAEQHLK) constitute a DNA-binding region (H-T-H motif). Residues Ser117 and Lys154 each act as for autocatalytic cleavage activity in the active site.

The protein belongs to the peptidase S24 family. In terms of assembly, homodimer.

It carries out the reaction Hydrolysis of Ala-|-Gly bond in repressor LexA.. Functionally, represses a number of genes involved in the response to DNA damage (SOS response), including recA and lexA. In the presence of single-stranded DNA, RecA interacts with LexA causing an autocatalytic cleavage which disrupts the DNA-binding part of LexA, leading to derepression of the SOS regulon and eventually DNA repair. The polypeptide is LexA repressor (Thiobacillus denitrificans (strain ATCC 25259 / T1)).